A 136-amino-acid polypeptide reads, in one-letter code: Small ribosomal subunit protein uS9 (136 aa).

This sequence belongs to the universal ribosomal protein uS9 family.

The polypeptide is Small ribosomal subunit protein uS9 (Borrelia duttonii (strain Ly)).